Consider the following 273-residue polypeptide: Undecaprenyl-diphosphatase (273 aa).

A run of 7 helical transmembrane segments spans residues 6–26 (SLLIAAILGVVEGLTEFLPVS), 45–65 (AKTFEVVIQLGSILAVVVMFW), 90–110 (LTLIHILLGMIPAVVLGLLFH), 116–136 (LFNPINVMYALVVGGLLLIAA), 190–210 (YAASEFSFLLAVPMMMGATAL), 222–242 (GDIPMFAVGFITAFVVALIAI), and 252–272 (ISFIPFAIYRFIVAAAVYVVF).

This sequence belongs to the UppP family.

It localises to the cell inner membrane. It catalyses the reaction di-trans,octa-cis-undecaprenyl diphosphate + H2O = di-trans,octa-cis-undecaprenyl phosphate + phosphate + H(+). Functionally, catalyzes the dephosphorylation of undecaprenyl diphosphate (UPP). Confers resistance to bacitracin. The chain is Undecaprenyl-diphosphatase from Escherichia coli O139:H28 (strain E24377A / ETEC).